Reading from the N-terminus, the 557-residue chain is Thermosome subunit 2 (557 aa).

The disordered stretch occupies residues 527–557 (DLSTGGDDDEEGGAPGGMGGMGGMGGMGGAM). Positions 539–557 (GAPGGMGGMGGMGGMGGAM) are enriched in gly residues.

This sequence belongs to the TCP-1 chaperonin family. The thermosome or CCT complex is a oligomeric complex of two octameric double-ring structures; the complex is probably a heterooligomer of CCT1, CCT2 and CCT3 with yet unknown stoichiometry.

Its function is as follows. Molecular chaperone that assists in the folding or refolding of nascent or denatured proteins along with ATP hydrolysis. ATPase activity is highest in thermosome assemblies containing CCT1:CCT2, followed by assemblies containing CCT1:CCT2:CCT3. Seems to contribute to thermosome ATPase activity. Not required for growth. The sequence is that of Thermosome subunit 2 (cct2) from Haloferax volcanii (strain ATCC 29605 / DSM 3757 / JCM 8879 / NBRC 14742 / NCIMB 2012 / VKM B-1768 / DS2) (Halobacterium volcanii).